The sequence spans 450 residues: Interferon-related developmental regulator 1 (450 aa).

Basic residues predominate over residues 1-10 (MPKNKKRNTP). Residues 1-46 (MPKNKKRNTPHRGGSGGGGSGAAATTAATAGGQHRNVQPFSDEDAS) are disordered. The span at 22 to 32 (AAATTAATAGG) shows a compositional bias: low complexity.

This sequence belongs to the IFRD family. Interacts with PSIP1/LEDGF.

Functionally, could play a role in regulating gene activity in the proliferative and/or differentiative pathways induced by NGF. May be an autocrine factor that attenuates or amplifies the initial ligand-induced signal. This is Interferon-related developmental regulator 1 (IFRD1) from Sus scrofa (Pig).